A 512-amino-acid chain; its full sequence is Flavonoid 3'-monooxygenase (512 aa).

A helical membrane pass occupies residues methionine 1–leucine 21. Residues arginine 22–glycine 512 lie on the Cytoplasmic side of the membrane. Residue cysteine 447 participates in heme binding.

Belongs to the cytochrome P450 family. It depends on heme as a cofactor. High expression in petals and ovaries and to a lower extent in sepals, pedicels, anthers and stems. Not detected in leaves, style or roots.

It localises to the endoplasmic reticulum membrane. The catalysed reaction is a 3'-unsubstituted flavone + reduced [NADPH--hemoprotein reductase] + O2 = a 3'-hydroxyflavone + oxidized [NADPH--hemoprotein reductase] + H2O + H(+). Its pathway is secondary metabolite biosynthesis; flavonoid biosynthesis. Its function is as follows. Catalyzes the 3'-hydroxylation of the flavonoid B-ring to the 3',4'-hydroxylated state. Convert naringenin to eriodictyol and dihydrokaempferol to dihydroquercetin. In Petunia hybrida (Petunia), this protein is Flavonoid 3'-monooxygenase (CYP75B2).